The primary structure comprises 375 residues: F420-dependent formate dehydrogenase 2 subunit beta (375 aa).

2 4Fe-4S ferredoxin-type domains span residues 268-291 (PEPE…DVCP) and 320-349 (IRLS…AKIY). Cys280, Cys283, Cys286, Cys290, Cys329, Cys332, Cys335, and Cys339 together coordinate [4Fe-4S] cluster.

It belongs to the FrhB family. As to quaternary structure, dimer of an alpha (FdhA2) and a beta (FdhB2) subunit. Requires [4Fe-4S] cluster as cofactor. It depends on FAD as a cofactor. The cofactor is Zn(2+).

It carries out the reaction oxidized coenzyme F420-(gamma-L-Glu)(n) + formate + 2 H(+) = reduced coenzyme F420-(gamma-L-Glu)(n) + CO2. Functionally, catalyzes the oxidation of formate to carbon dioxide, with coenzyme F420 as the electron acceptor. In vitro can also use methyl viologen as electron acceptor. This Methanococcus maripaludis (strain DSM 14266 / JCM 13030 / NBRC 101832 / S2 / LL) protein is F420-dependent formate dehydrogenase 2 subunit beta.